The following is a 79-amino-acid chain: Small ribosomal subunit protein uS17 (79 aa).

It belongs to the universal ribosomal protein uS17 family. As to quaternary structure, part of the 30S ribosomal subunit.

Its function is as follows. One of the primary rRNA binding proteins, it binds specifically to the 5'-end of 16S ribosomal RNA. This Rhizobium leguminosarum bv. trifolii (strain WSM2304) protein is Small ribosomal subunit protein uS17.